A 294-amino-acid chain; its full sequence is Protein ATC1/LIC4 (294 aa).

Residues 114–178 (YTGKASLDKS…SSSLASSDAN (65 aa)) are disordered. The segment covering 130 to 145 (HKPDKEQKNYKIDKPT) has biased composition (basic and acidic residues). Over residues 153-175 (LKTTNEPMLSPASLSPSSSLASS) the composition is skewed to low complexity.

Its subcellular location is the cytoplasm. It is found in the nucleus. Involved in cation homeostasis and in the regulation of the cation stress signaling cascades. Also involved in bipolar budding. The sequence is that of Protein ATC1/LIC4 (ATC1) from Saccharomyces cerevisiae (strain ATCC 204508 / S288c) (Baker's yeast).